Here is a 148-residue protein sequence, read N- to C-terminus: Deoxyuridine 5'-triphosphate nucleotidohydrolase (148 aa).

Substrate contacts are provided by residues 67-69, Asn-80, 84-86, and Met-94; these read RSG and LID.

This sequence belongs to the dUTPase family. It depends on Mg(2+) as a cofactor.

It carries out the reaction dUTP + H2O = dUMP + diphosphate + H(+). It participates in pyrimidine metabolism; dUMP biosynthesis; dUMP from dCTP (dUTP route): step 2/2. In terms of biological role, this enzyme is involved in nucleotide metabolism: it produces dUMP, the immediate precursor of thymidine nucleotides and it decreases the intracellular concentration of dUTP so that uracil cannot be incorporated into DNA. The sequence is that of Deoxyuridine 5'-triphosphate nucleotidohydrolase from Ralstonia nicotianae (strain ATCC BAA-1114 / GMI1000) (Ralstonia solanacearum).